The chain runs to 365 residues: Zinc finger MYND domain-containing protein 12 (365 aa).

The Zn(2+) site is built by Cys-17, Cys-20, Cys-28, Cys-31, Cys-37, His-41, His-50, and Cys-54. The segment at 17-54 (CEVCEAPAERVCAACTVTYYCGVVHQKADWDSIHEKIC) adopts an MYND-type; atypical zinc-finger fold. TPR repeat units follow at residues 172-205 (SLLHRNLGLLYIAKKNYEEARYHLANDIYFASCA) and 214-247 (SGGYFHLANIFYDLKKLDLADTLYTKVSEIWHAY).

In terms of tissue distribution, expressed predominantly in the testis.

It is found in the cell projection. It localises to the cilium. The protein resides in the flagellum. Its function is as follows. Required for sperm flagellum function and male fertility. The polypeptide is Zinc finger MYND domain-containing protein 12 (ZMYND12) (Homo sapiens (Human)).